The sequence spans 284 residues: 3-methyl-2-oxobutanoate hydroxymethyltransferase 2 (284 aa).

The Mg(2+) site is built by Asp49 and Asp88. 3-methyl-2-oxobutanoate-binding positions include 49–50 (DS), Asp88, and Lys118. A Mg(2+)-binding site is contributed by Glu120. Glu187 functions as the Proton acceptor in the catalytic mechanism.

Belongs to the PanB family. Homodecamer; pentamer of dimers. The cofactor is Mg(2+).

The protein localises to the cytoplasm. The enzyme catalyses 3-methyl-2-oxobutanoate + (6R)-5,10-methylene-5,6,7,8-tetrahydrofolate + H2O = 2-dehydropantoate + (6S)-5,6,7,8-tetrahydrofolate. Its pathway is cofactor biosynthesis; (R)-pantothenate biosynthesis; (R)-pantoate from 3-methyl-2-oxobutanoate: step 1/2. Its function is as follows. Catalyzes the reversible reaction in which hydroxymethyl group from 5,10-methylenetetrahydrofolate is transferred onto alpha-ketoisovalerate to form ketopantoate. The sequence is that of 3-methyl-2-oxobutanoate hydroxymethyltransferase 2 from Burkholderia ambifaria (strain ATCC BAA-244 / DSM 16087 / CCUG 44356 / LMG 19182 / AMMD) (Burkholderia cepacia (strain AMMD)).